Consider the following 550-residue polypeptide: Chaperonin GroEL (550 aa).

Residues threonine 30 to proline 33, lysine 51, aspartate 87 to threonine 91, glycine 415, asparagine 479 to alanine 481, and aspartate 495 contribute to the ATP site.

The protein belongs to the chaperonin (HSP60) family. In terms of assembly, forms a cylinder of 14 subunits composed of two heptameric rings stacked back-to-back. Interacts with the co-chaperonin GroES.

Its subcellular location is the cytoplasm. The enzyme catalyses ATP + H2O + a folded polypeptide = ADP + phosphate + an unfolded polypeptide.. Its function is as follows. Together with its co-chaperonin GroES, plays an essential role in assisting protein folding. The GroEL-GroES system forms a nano-cage that allows encapsulation of the non-native substrate proteins and provides a physical environment optimized to promote and accelerate protein folding. The protein is Chaperonin GroEL of Polynucleobacter asymbioticus (strain DSM 18221 / CIP 109841 / QLW-P1DMWA-1) (Polynucleobacter necessarius subsp. asymbioticus).